The following is a 414-amino-acid chain: Serine hydroxymethyltransferase (414 aa).

(6S)-5,6,7,8-tetrahydrofolate contacts are provided by residues Leu-121 and 125–127 (GHL). Residue Lys-229 is modified to N6-(pyridoxal phosphate)lysine.

This sequence belongs to the SHMT family. As to quaternary structure, homodimer. Pyridoxal 5'-phosphate is required as a cofactor.

It is found in the cytoplasm. The enzyme catalyses (6R)-5,10-methylene-5,6,7,8-tetrahydrofolate + glycine + H2O = (6S)-5,6,7,8-tetrahydrofolate + L-serine. It participates in one-carbon metabolism; tetrahydrofolate interconversion. Its pathway is amino-acid biosynthesis; glycine biosynthesis; glycine from L-serine: step 1/1. Functionally, catalyzes the reversible interconversion of serine and glycine with tetrahydrofolate (THF) serving as the one-carbon carrier. This reaction serves as the major source of one-carbon groups required for the biosynthesis of purines, thymidylate, methionine, and other important biomolecules. Also exhibits THF-independent aldolase activity toward beta-hydroxyamino acids, producing glycine and aldehydes, via a retro-aldol mechanism. This chain is Serine hydroxymethyltransferase, found in Verminephrobacter eiseniae (strain EF01-2).